Consider the following 188-residue polypeptide: Trafficking protein particle complex subunit 5 (188 aa).

A Phosphoserine modification is found at serine 10.

This sequence belongs to the TRAPP small subunits family. BET3 subfamily. Component of the multisubunit TRAPP (transport protein particle) complex, which includes at least TRAPPC2, TRAPPC2L, TRAPPC3, TRAPPC3L, TRAPPC4, TRAPPC5, TRAPPC8, TRAPPC9, TRAPPC10, TRAPPC11 and TRAPPC12.

It localises to the golgi apparatus. It is found in the cis-Golgi network. Its subcellular location is the endoplasmic reticulum. May play a role in vesicular transport from endoplasmic reticulum to Golgi. The protein is Trafficking protein particle complex subunit 5 (TRAPPC5) of Bos taurus (Bovine).